Consider the following 569-residue polypeptide: Protein misato homolog 1 (569 aa).

Ser41 and Ser495 each carry phosphoserine.

The protein belongs to the misato family.

It localises to the mitochondrion outer membrane. The protein localises to the cytoplasm. Its function is as follows. Involved in the regulation of mitochondrial distribution and morphology. Required for mitochondrial fusion and mitochondrial network formation. The sequence is that of Protein misato homolog 1 (MSTO1) from Macaca fascicularis (Crab-eating macaque).